The sequence spans 40 residues: Photosystem II reaction center protein J (40 aa).

A helical transmembrane segment spans residues 8–28; the sequence is IPLWVVATIAGLGVITVVGIF.

The protein belongs to the PsbJ family. PSII is composed of 1 copy each of membrane proteins PsbA, PsbB, PsbC, PsbD, PsbE, PsbF, PsbH, PsbI, PsbJ, PsbK, PsbL, PsbM, PsbT, PsbX, PsbY, PsbZ, Psb30/Ycf12, peripheral proteins PsbO, CyanoQ (PsbQ), PsbU, PsbV and a large number of cofactors. It forms dimeric complexes.

The protein localises to the cellular thylakoid membrane. Its function is as follows. One of the components of the core complex of photosystem II (PSII). PSII is a light-driven water:plastoquinone oxidoreductase that uses light energy to abstract electrons from H(2)O, generating O(2) and a proton gradient subsequently used for ATP formation. It consists of a core antenna complex that captures photons, and an electron transfer chain that converts photonic excitation into a charge separation. This chain is Photosystem II reaction center protein J, found in Trichormus variabilis (strain ATCC 29413 / PCC 7937) (Anabaena variabilis).